Consider the following 342-residue polypeptide: tRNA N6-adenosine threonylcarbamoyltransferase (342 aa).

Fe cation-binding residues include histidine 115 and histidine 119. Residues 137-141 (IVSGG), aspartate 170, glycine 183, aspartate 187, and asparagine 276 each bind substrate. Aspartate 304 provides a ligand contact to Fe cation.

This sequence belongs to the KAE1 / TsaD family. Requires Fe(2+) as cofactor.

Its subcellular location is the cytoplasm. It catalyses the reaction L-threonylcarbamoyladenylate + adenosine(37) in tRNA = N(6)-L-threonylcarbamoyladenosine(37) in tRNA + AMP + H(+). Its function is as follows. Required for the formation of a threonylcarbamoyl group on adenosine at position 37 (t(6)A37) in tRNAs that read codons beginning with adenine. Is involved in the transfer of the threonylcarbamoyl moiety of threonylcarbamoyl-AMP (TC-AMP) to the N6 group of A37, together with TsaE and TsaB. TsaD likely plays a direct catalytic role in this reaction. The protein is tRNA N6-adenosine threonylcarbamoyltransferase of Staphylococcus saprophyticus subsp. saprophyticus (strain ATCC 15305 / DSM 20229 / NCIMB 8711 / NCTC 7292 / S-41).